A 501-amino-acid chain; its full sequence is Glycerol kinase (501 aa).

Thr16 provides a ligand contact to ADP. Positions 16, 17, and 18 each coordinate ATP. Residue Thr16 participates in sn-glycerol 3-phosphate binding. Arg20 provides a ligand contact to ADP. Residues Arg84, Glu85, Tyr135, and Asp242 each contribute to the sn-glycerol 3-phosphate site. Residues Arg84, Glu85, Tyr135, Asp242, and Gln243 each contribute to the glycerol site. Thr264 and Gly307 together coordinate ADP. Residues Thr264, Gly307, Gln311, and Gly408 each contribute to the ATP site. Residue Gly408 participates in ADP binding.

The protein belongs to the FGGY kinase family.

The enzyme catalyses glycerol + ATP = sn-glycerol 3-phosphate + ADP + H(+). It functions in the pathway polyol metabolism; glycerol degradation via glycerol kinase pathway; sn-glycerol 3-phosphate from glycerol: step 1/1. Key enzyme in the regulation of glycerol uptake and metabolism. Catalyzes the phosphorylation of glycerol to yield sn-glycerol 3-phosphate. This Saccharolobus islandicus (strain M.14.25 / Kamchatka #1) (Sulfolobus islandicus) protein is Glycerol kinase.